The primary structure comprises 77 residues: Translation initiation factor IF-1, chloroplastic (77 aa).

In terms of domain architecture, S1-like spans 1 to 71; sequence MKEQKWVHEG…TRGRIIYRLR (71 aa).

The protein belongs to the IF-1 family. In terms of assembly, component of the 30S ribosomal translation pre-initiation complex which assembles on the 30S ribosome in the order IF-2 and IF-3, IF-1 and N-formylmethionyl-tRNA(fMet); mRNA recruitment can occur at any time during PIC assembly.

It localises to the plastid. It is found in the chloroplast. Functionally, one of the essential components for the initiation of protein synthesis. Stabilizes the binding of IF-2 and IF-3 on the 30S subunit to which N-formylmethionyl-tRNA(fMet) subsequently binds. Helps modulate mRNA selection, yielding the 30S pre-initiation complex (PIC). Upon addition of the 50S ribosomal subunit IF-1, IF-2 and IF-3 are released leaving the mature 70S translation initiation complex. The polypeptide is Translation initiation factor IF-1, chloroplastic (Cercidiphyllum japonicum (Katsura tree)).